Reading from the N-terminus, the 81-residue chain is Putative defensin-like protein 52 (81 aa).

The N-terminal stretch at methionine 1–alanine 20 is a signal peptide. 2 disulfides stabilise this stretch: cysteine 31–cysteine 55 and cysteine 41–cysteine 64.

It belongs to the DEFL family.

The protein resides in the secreted. The protein is Putative defensin-like protein 52 of Arabidopsis thaliana (Mouse-ear cress).